The chain runs to 279 residues: Undecaprenyl-diphosphatase (279 aa).

Transmembrane regions (helical) follow at residues 2–22, 44–64, 85–105, 113–133, 163–183, 188–208, 223–243, and 255–275; these read LIIELLKAIFFGIIEGITEWL, AFIEMFNIVIQLGAIIAVMLI, WQLWLKVVIACIPSILIAVPL, FYFMVPIAIALIVYGIAFIWI, VLSIVPGTSRSGATILGAIIL, TVAADFTFFLAIPTMFGYSGL, AQVLILLVASLTAFVVSLLAI, and FTIFGKYRIVLGSLLLIYSFF.

It belongs to the UppP family.

It localises to the cell membrane. The catalysed reaction is di-trans,octa-cis-undecaprenyl diphosphate + H2O = di-trans,octa-cis-undecaprenyl phosphate + phosphate + H(+). Catalyzes the dephosphorylation of undecaprenyl diphosphate (UPP). Confers resistance to bacitracin. The sequence is that of Undecaprenyl-diphosphatase from Streptococcus pyogenes serotype M28 (strain MGAS6180).